Here is a 128-residue protein sequence, read N- to C-terminus: Glycine cleavage system H protein (128 aa).

Residues 22–104 (AIVVGITDFA…YEEGWMITIE (83 aa)) enclose the Lipoyl-binding domain. Lys63 carries the N6-lipoyllysine modification.

Belongs to the GcvH family. The glycine cleavage system is composed of four proteins: P, T, L and H. (R)-lipoate serves as cofactor.

Functionally, the glycine cleavage system catalyzes the degradation of glycine. The H protein shuttles the methylamine group of glycine from the P protein to the T protein. In Anaeromyxobacter dehalogenans (strain 2CP-1 / ATCC BAA-258), this protein is Glycine cleavage system H protein.